The sequence spans 450 residues: Na(+)/H(+) antiporter NhaA 2 (450 aa).

12 helical membrane-spanning segments follow: residues 43-63, 86-106, 124-144, 155-175, 185-205, 208-228, 234-254, 258-278, 299-319, 326-346, 364-384, and 398-418; these read VGGA…NSPW, LTLG…VVGL, ALPM…FVAV, GWAI…AVIS, FLLT…AVFY, EINL…ALCV, SWWL…ESGV, VAGV…AGGP, VAVP…VSGL, PITL…IFLT, WIDV…SLLI, and FVKV…AVLL.

This sequence belongs to the NhaA Na(+)/H(+) (TC 2.A.33) antiporter family.

It is found in the cell membrane. The enzyme catalyses Na(+)(in) + 2 H(+)(out) = Na(+)(out) + 2 H(+)(in). Na(+)/H(+) antiporter that extrudes sodium in exchange for external protons. The chain is Na(+)/H(+) antiporter NhaA 2 from Mycobacterium sp. (strain KMS).